A 48-amino-acid polypeptide reads, in one-letter code: Fimbrial assembly protein, serogroup A1 (48 aa).

This is Fimbrial assembly protein, serogroup A1 (fimB) from Dichelobacter nodosus (Bacteroides nodosus).